Consider the following 186-residue polypeptide: Peptide deformylase (186 aa).

The Fe cation site is built by cysteine 99 and histidine 141. Residue glutamate 142 is part of the active site. Histidine 145 provides a ligand contact to Fe cation.

Belongs to the polypeptide deformylase family. Fe(2+) serves as cofactor.

The catalysed reaction is N-terminal N-formyl-L-methionyl-[peptide] + H2O = N-terminal L-methionyl-[peptide] + formate. In terms of biological role, removes the formyl group from the N-terminal Met of newly synthesized proteins. Requires at least a dipeptide for an efficient rate of reaction. N-terminal L-methionine is a prerequisite for activity but the enzyme has broad specificity at other positions. This Chlamydia caviae (strain ATCC VR-813 / DSM 19441 / 03DC25 / GPIC) (Chlamydophila caviae) protein is Peptide deformylase.